The following is a 126-amino-acid chain: MKMTKLATLFLTATLSLASGAALAADSGAQTNNGQANAAADAGQVAPDARENVAPNNVDNNGVNTGSGGTMLHSDGSSMNNDGMTKDEEHKNTMCKDGRCPDINKKVQTGDGINNDVDTKTDGTTQ.

An N-terminal signal peptide occupies residues 1–24; sequence MKMTKLATLFLTATLSLASGAALA. Over residues 27–47 the composition is skewed to low complexity; that stretch reads SGAQTNNGQANAAADAGQVAP. The interval 27-126 is disordered; that stretch reads SGAQTNNGQA…VDTKTDGTTQ (100 aa). The segment covering 54 to 64 has biased composition (polar residues); that stretch reads APNNVDNNGVN. Composition is skewed to basic and acidic residues over residues 84–105 and 117–126; these read MTKD…DINK and VDTKTDGTTQ.

This is an uncharacterized protein from Shigella flexneri.